The sequence spans 307 residues: Ornithine carbamoyltransferase (307 aa).

Residues 53 to 56 (STRT), Gln80, Arg104, and 131 to 134 (HPCQ) each bind carbamoyl phosphate. L-ornithine-binding positions include Asn162, Asp219, and 223-224 (SM). Residues 259–260 (CL) and Arg287 contribute to the carbamoyl phosphate site.

This sequence belongs to the aspartate/ornithine carbamoyltransferase superfamily. OTCase family.

The protein resides in the cytoplasm. It catalyses the reaction carbamoyl phosphate + L-ornithine = L-citrulline + phosphate + H(+). It functions in the pathway amino-acid biosynthesis; L-arginine biosynthesis; L-arginine from L-ornithine and carbamoyl phosphate: step 1/3. In terms of biological role, reversibly catalyzes the transfer of the carbamoyl group from carbamoyl phosphate (CP) to the N(epsilon) atom of ornithine (ORN) to produce L-citrulline. This is Ornithine carbamoyltransferase from Psychrobacter arcticus (strain DSM 17307 / VKM B-2377 / 273-4).